The chain runs to 102 residues: Small ribosomal subunit protein eS24 (102 aa).

Belongs to the eukaryotic ribosomal protein eS24 family.

This Methanococcus maripaludis (strain C5 / ATCC BAA-1333) protein is Small ribosomal subunit protein eS24.